The chain runs to 827 residues: Rho GTPase-activating protein 6 (827 aa).

Positions 18-125 (TVYKSGPLFI…WKAALEQALA (108 aa)) constitute a PH domain. Positions 172-371 (LALEEIDGSP…ALLEDYGNMI (200 aa)) constitute a Rho-GAP domain. 2 disordered regions span residues 379–437 (CSTS…SDYA) and 517–561 (YTTS…SSGN). Over residues 401 to 412 (IVVKHPDLHTLD) the composition is skewed to basic and acidic residues. A compositionally biased stretch (acidic residues) spans 413–423 (IEEGETDDDND). Positions 517 to 543 (YTTSAEKPASKTTGSSTVNSKRSSSWG) are enriched in polar residues. A coiled-coil region spans residues 560–684 (GNDELLIQRL…HQLSQQRQHH (125 aa)).

Functionally, acts as a GTPase activator for the Rac-type GTPase by converting it to an inactive GDP-bound state. This chain is Rho GTPase-activating protein 6 (ROPGAP6), found in Arabidopsis thaliana (Mouse-ear cress).